The primary structure comprises 208 residues: Large ribosomal subunit protein uL3 (208 aa).

The disordered stretch occupies residues Gly116 to Ala148.

Belongs to the universal ribosomal protein uL3 family. As to quaternary structure, part of the 50S ribosomal subunit. Forms a cluster with proteins L14 and L19.

Its function is as follows. One of the primary rRNA binding proteins, it binds directly near the 3'-end of the 23S rRNA, where it nucleates assembly of the 50S subunit. This is Large ribosomal subunit protein uL3 from Streptococcus pneumoniae (strain Hungary19A-6).